The sequence spans 218 residues: Uracil-DNA glycosylase (218 aa).

Residue aspartate 59 is the Proton acceptor of the active site.

This sequence belongs to the uracil-DNA glycosylase (UDG) superfamily. UNG family.

Its subcellular location is the cytoplasm. It carries out the reaction Hydrolyzes single-stranded DNA or mismatched double-stranded DNA and polynucleotides, releasing free uracil.. Functionally, excises uracil residues from the DNA which can arise as a result of misincorporation of dUMP residues by DNA polymerase or due to deamination of cytosine. The protein is Uracil-DNA glycosylase of Staphylococcus saprophyticus subsp. saprophyticus (strain ATCC 15305 / DSM 20229 / NCIMB 8711 / NCTC 7292 / S-41).